The sequence spans 233 residues: Ribosome maturation factor RimP (233 aa).

The segment covering 167-179 (RGKAAEREKKRDL) has biased composition (basic and acidic residues). The tract at residues 167-233 (RGKAAEREKK…RARRGEIDPD (67 aa)) is disordered. Positions 187-196 (PHAKPAAQAK) are enriched in low complexity. Residues 220–233 (LAADRARRGEIDPD) show a composition bias toward basic and acidic residues.

This sequence belongs to the RimP family.

It localises to the cytoplasm. In terms of biological role, required for maturation of 30S ribosomal subunits. The protein is Ribosome maturation factor RimP of Bradyrhizobium sp. (strain ORS 278).